We begin with the raw amino-acid sequence, 348 residues long: MLLRMALCLTVSTILCAGFASNLMDILRRPVNQVWDMFEESHLPAGIGLDAWSKAKEMATAMTSLGASQRALFLRQVSPSQADLTEAALVLRGAQPLPEDRKQVFIREGSPSTAVRDLAEALYSKGAVLADGTGRGALKMMSAFQPGEAFMLTIKLSLYAGVVISFPLLLYFLLQFIIPGLLEHERKLLYKCMAVGFGLFLAGTLFCYFIVLPRVLTFFYTYSLEFGISNEWRIGYYLSFATQMILMFGLAFELPVVVMPFVKLGVLTYDMMKSTRRYAIVAIAVLAAVITPTPDVATMMLMAVPMYALYEICIILAWMHERKEAARTREEIARFEEDFNNNNSPYNQ.

6 helical membrane-spanning segments follow: residues 7-27, 162-182, 192-212, 244-264, 278-298, and 299-319; these read LCLTVSTILCAGFASNLMDIL, VVISFPLLLYFLLQFIIPGLL, CMAVGFGLFLAGTLFCYFIVL, MILMFGLAFELPVVVMPFVKL, YAIVAIAVLAAVITPTPDVAT, and MMLMAVPMYALYEICIILAWM.

Belongs to the TatC family. As to quaternary structure, forms a complex with TatA.

The protein resides in the cell membrane. In terms of biological role, part of the twin-arginine translocation (Tat) system that transports large folded proteins containing a characteristic twin-arginine motif in their signal peptide across membranes. This is Sec-independent protein translocase protein TatC from Akkermansia muciniphila (strain ATCC BAA-835 / DSM 22959 / JCM 33894 / BCRC 81048 / CCUG 64013 / CIP 107961 / Muc).